The following is a 139-amino-acid chain: uncharacterized protein (139 aa).

3 helical membrane passes run 38–60 (YFLH…LYVF), 72–94 (FIIL…CAGS), and 114–136 (ITVV…LIVA).

It is found in the cell membrane. This is an uncharacterized protein from Treponema pallidum (strain Nichols).